The following is a 311-amino-acid chain: 4-hydroxy-tetrahydrodipicolinate synthase (311 aa).

T51 contacts pyruvate. Catalysis depends on Y140, which acts as the Proton donor/acceptor. K168 serves as the catalytic Schiff-base intermediate with substrate. Residue I209 coordinates pyruvate.

This sequence belongs to the DapA family. Homotetramer; dimer of dimers.

It localises to the cytoplasm. The enzyme catalyses L-aspartate 4-semialdehyde + pyruvate = (2S,4S)-4-hydroxy-2,3,4,5-tetrahydrodipicolinate + H2O + H(+). The protein operates within amino-acid biosynthesis; L-lysine biosynthesis via DAP pathway; (S)-tetrahydrodipicolinate from L-aspartate: step 3/4. Catalyzes the condensation of (S)-aspartate-beta-semialdehyde [(S)-ASA] and pyruvate to 4-hydroxy-tetrahydrodipicolinate (HTPA). The sequence is that of 4-hydroxy-tetrahydrodipicolinate synthase from Streptococcus pneumoniae (strain Taiwan19F-14).